The chain runs to 249 residues: NH(3)-dependent NAD(+) synthetase (249 aa).

Residue Asp-34 participates in Mg(2+) binding. Arg-110 lines the deamido-NAD(+) pocket. Position 130 (Thr-130) interacts with ATP. Mg(2+) is bound at residue Glu-135. Residues Lys-143 and Asp-150 each coordinate deamido-NAD(+). ATP is bound by residues Lys-159 and Ser-181. Deamido-NAD(+) is bound at residue 232–233 (HK).

It belongs to the NAD synthetase family. As to quaternary structure, homodimer.

It carries out the reaction deamido-NAD(+) + NH4(+) + ATP = AMP + diphosphate + NAD(+) + H(+). It participates in cofactor biosynthesis; NAD(+) biosynthesis; NAD(+) from deamido-NAD(+) (ammonia route): step 1/1. Functionally, catalyzes the ATP-dependent amidation of deamido-NAD to form NAD. Uses ammonia as a nitrogen source. This is NH(3)-dependent NAD(+) synthetase from Picrophilus torridus (strain ATCC 700027 / DSM 9790 / JCM 10055 / NBRC 100828 / KAW 2/3).